The primary structure comprises 389 residues: 1-deoxy-D-xylulose 5-phosphate reductoisomerase (389 aa).

The NADPH site is built by Ser11, Gly12, Ser13, Val14, Asn39, and Asn122. Lys123 serves as a coordination point for 1-deoxy-D-xylulose 5-phosphate. Position 124 (Glu124) interacts with NADPH. Position 148 (Asp148) interacts with Mn(2+). Ser149, Glu150, Ser174, and His197 together coordinate 1-deoxy-D-xylulose 5-phosphate. Glu150 is a Mn(2+) binding site. Gly203 contributes to the NADPH binding site. Ser210, Asn215, Lys216, and Glu219 together coordinate 1-deoxy-D-xylulose 5-phosphate. A Mn(2+)-binding site is contributed by Glu219.

The protein belongs to the DXR family. Mg(2+) is required as a cofactor. Requires Mn(2+) as cofactor.

The enzyme catalyses 2-C-methyl-D-erythritol 4-phosphate + NADP(+) = 1-deoxy-D-xylulose 5-phosphate + NADPH + H(+). It participates in isoprenoid biosynthesis; isopentenyl diphosphate biosynthesis via DXP pathway; isopentenyl diphosphate from 1-deoxy-D-xylulose 5-phosphate: step 1/6. Functionally, catalyzes the NADPH-dependent rearrangement and reduction of 1-deoxy-D-xylulose-5-phosphate (DXP) to 2-C-methyl-D-erythritol 4-phosphate (MEP). This Leptospira borgpetersenii serovar Hardjo-bovis (strain JB197) protein is 1-deoxy-D-xylulose 5-phosphate reductoisomerase.